A 135-amino-acid chain; its full sequence is Large ribosomal subunit protein bL19 (135 aa).

Belongs to the bacterial ribosomal protein bL19 family.

In terms of biological role, this protein is located at the 30S-50S ribosomal subunit interface and may play a role in the structure and function of the aminoacyl-tRNA binding site. This Protochlamydia amoebophila (strain UWE25) protein is Large ribosomal subunit protein bL19.